The following is a 299-amino-acid chain: Taste receptor type 2 member 4 (299 aa).

Over 1–9 (MLQLFYFSA) the chain is Extracellular. Residues 10-30 (IIASVILNFVGIIMNLFIMVV) traverse the membrane as a helical segment. Residues 31–46 (NCKTWVKSHRISSSDR) are Cytoplasmic-facing. The helical transmembrane segment at 47-67 (ILFSLGITRFLMLGLFLVNTI) threads the bilayer. Residues 68 to 81 (FFVSSNTERSVYLS) are Extracellular-facing. A helical membrane pass occupies residues 82-102 (AFFVLCFMFXDSSSLWFVTLL). Over 103-131 (NILYCVKITNFQHSVFLLLKQNISPKIPR) the chain is Cytoplasmic. A helical membrane pass occupies residues 132-152 (LLLACVLISAFTTCLYITLSQ). At 153 to 172 (ASPFPELVTKRNNTSFNTHE) the chain is on the extracellular side. Asn-164 and Asn-165 each carry an N-linked (GlcNAc...) asparagine glycan. The helical transmembrane segment at 173-193 (GILSLVVSLVLSSSLQFIINV) threads the bilayer. The Cytoplasmic segment spans residues 194-230 (TSASLLIHSLRRHIQKMQKNATGFWNPQTEAHVGAMK). Residues 231-251 (LMIYFLILYIPYSVATLVQYL) form a helical membrane-spanning segment. Residues 252-262 (PFYVGMDMGTK) lie on the Extracellular side of the membrane. The helical transmembrane segment at 263–283 (AICLIFATLYSPGHSVLIIIT) threads the bilayer. The Cytoplasmic segment spans residues 284–299 (HPKLKTTAKKILCFKK).

The protein belongs to the G-protein coupled receptor T2R family.

The protein resides in the membrane. It localises to the cell projection. The protein localises to the cilium membrane. Gustducin-coupled receptor implicated in the perception of bitter compounds in the oral cavity and the gastrointestinal tract. Signals through PLCB2 and the calcium-regulated cation channel TRPM5. In airway epithelial cells, binding of denatonium increases the intracellular calcium ion concentration and stimulates ciliary beat frequency. The chain is Taste receptor type 2 member 4 (TAS2R4) from Pongo pygmaeus (Bornean orangutan).